A 79-amino-acid chain; its full sequence is Putative defensin-like protein 137 (79 aa).

The N-terminal stretch at 1 to 24 is a signal peptide; the sequence is MKKYFQPSFVILIIFTVLVLGVVG. Cystine bridges form between C33–C78, C42–C62, C47–C72, and C51–C74.

It belongs to the DEFL family.

The protein resides in the secreted. The chain is Putative defensin-like protein 137 (LCR14) from Arabidopsis thaliana (Mouse-ear cress).